The following is a 266-amino-acid chain: Indole-3-glycerol phosphate synthase (266 aa).

This sequence belongs to the TrpC family.

It carries out the reaction 1-(2-carboxyphenylamino)-1-deoxy-D-ribulose 5-phosphate + H(+) = (1S,2R)-1-C-(indol-3-yl)glycerol 3-phosphate + CO2 + H2O. It functions in the pathway amino-acid biosynthesis; L-tryptophan biosynthesis; L-tryptophan from chorismate: step 4/5. The chain is Indole-3-glycerol phosphate synthase from Herminiimonas arsenicoxydans.